We begin with the raw amino-acid sequence, 122 residues long: Serum amyloid A-2 protein (122 aa).

Positions 1–18 are cleaved as a signal peptide; sequence MKPFLSIIFCFLVLGVDS. Glutamine 19 bears the Pyrrolidone carboxylic acid mark. The tract at residues 100–122 is disordered; it reads ANEWGRSGKDPNFFRPPGLPSKY.

This sequence belongs to the SAA family. In terms of assembly, apolipoprotein of the HDL complex. In terms of tissue distribution, expressed by the liver; secreted in plasma.

The protein resides in the secreted. Its function is as follows. Major acute phase reactant. This chain is Serum amyloid A-2 protein (SAA2), found in Mesocricetus auratus (Golden hamster).